A 276-amino-acid polypeptide reads, in one-letter code: F420-dependent methylenetetrahydromethanopterin dehydrogenase (276 aa).

This sequence belongs to the MTD family.

The catalysed reaction is 5,10-methylenetetrahydromethanopterin + oxidized coenzyme F420-(gamma-L-Glu)(n) + 2 H(+) = 5,10-methenyl-5,6,7,8-tetrahydromethanopterin + reduced coenzyme F420-(gamma-L-Glu)(n). In terms of biological role, catalyzes the oxidation of methylene-H(4)MPT to methenyl-H(4)MPT(+). This Methanosphaera stadtmanae (strain ATCC 43021 / DSM 3091 / JCM 11832 / MCB-3) protein is F420-dependent methylenetetrahydromethanopterin dehydrogenase.